The primary structure comprises 89 residues: MIIAAYLVLINLCGFWVMGIDKRKAQQHKWRISEDRLWLIAIVFGALGVWLGMQTFRHKTKHASFKYGVPLLLVIEAILIAIYYSPFDL.

The next 3 membrane-spanning stretches (helical) occupy residues Ala5–Ala25, Arg36–Phe56, and Tyr67–Phe87.

The protein localises to the cell membrane. This is an uncharacterized protein from Bacillus subtilis (strain 168).